Reading from the N-terminus, the 292-residue chain is Phosphoribosylaminoimidazole-succinocarboxamide synthase (292 aa).

It belongs to the SAICAR synthetase family.

It catalyses the reaction 5-amino-1-(5-phospho-D-ribosyl)imidazole-4-carboxylate + L-aspartate + ATP = (2S)-2-[5-amino-1-(5-phospho-beta-D-ribosyl)imidazole-4-carboxamido]succinate + ADP + phosphate + 2 H(+). It participates in purine metabolism; IMP biosynthesis via de novo pathway; 5-amino-1-(5-phospho-D-ribosyl)imidazole-4-carboxamide from 5-amino-1-(5-phospho-D-ribosyl)imidazole-4-carboxylate: step 1/2. The sequence is that of Phosphoribosylaminoimidazole-succinocarboxamide synthase from Thermodesulfovibrio yellowstonii (strain ATCC 51303 / DSM 11347 / YP87).